A 368-amino-acid polypeptide reads, in one-letter code: Biotin synthase (368 aa).

A Radical SAM core domain is found at 74–309 (CCGNVVDLCS…QQILRYAGGR (236 aa)). Residues cysteine 92, cysteine 96, and cysteine 99 each contribute to the [4Fe-4S] cluster site. The [2Fe-2S] cluster site is built by cysteine 137, cysteine 174, cysteine 234, and arginine 304.

It belongs to the radical SAM superfamily. Biotin synthase family. Homodimer. [4Fe-4S] cluster is required as a cofactor. The cofactor is [2Fe-2S] cluster.

The catalysed reaction is (4R,5S)-dethiobiotin + (sulfur carrier)-SH + 2 reduced [2Fe-2S]-[ferredoxin] + 2 S-adenosyl-L-methionine = (sulfur carrier)-H + biotin + 2 5'-deoxyadenosine + 2 L-methionine + 2 oxidized [2Fe-2S]-[ferredoxin]. Its pathway is cofactor biosynthesis; biotin biosynthesis; biotin from 7,8-diaminononanoate: step 2/2. Catalyzes the conversion of dethiobiotin (DTB) to biotin by the insertion of a sulfur atom into dethiobiotin via a radical-based mechanism. This Rippkaea orientalis (strain PCC 8801 / RF-1) (Cyanothece sp. (strain PCC 8801)) protein is Biotin synthase.